Here is a 423-residue protein sequence, read N- to C-terminus: Mannose-6-phosphate isomerase (423 aa).

Alanine 2 carries the post-translational modification N-acetylalanine. A phosphoserine mark is found at serine 102 and serine 108. Positions 110, 112, 137, and 276 each coordinate Zn(2+). Arginine 295 is a catalytic residue.

Belongs to the mannose-6-phosphate isomerase type 1 family. Requires Zn(2+) as cofactor.

It is found in the cytoplasm. The catalysed reaction is D-mannose 6-phosphate = D-fructose 6-phosphate. It functions in the pathway nucleotide-sugar biosynthesis; GDP-alpha-D-mannose biosynthesis; alpha-D-mannose 1-phosphate from D-fructose 6-phosphate: step 1/2. Its function is as follows. Isomerase that catalyzes the interconversion of fructose-6-P and mannose-6-P and has a critical role in the supply of D-mannose derivatives required for many eukaryotic glycosylation reactions. In Pan troglodytes (Chimpanzee), this protein is Mannose-6-phosphate isomerase (MPI).